A 353-amino-acid chain; its full sequence is D-alanine--D-alanine ligase (353 aa).

The ATP-grasp domain maps to 141-349 (KAAFAAAGLP…LPDLVAQLVH (209 aa)). 176 to 231 (EAELGYPCFVKPANMGSSVGISKARHRDQLLAGLKEAARHDTRLVVEHGVSARELE) serves as a coordination point for ATP. 3 residues coordinate Mg(2+): D302, E316, and N318.

The protein belongs to the D-alanine--D-alanine ligase family. Mg(2+) is required as a cofactor. Requires Mn(2+) as cofactor.

It localises to the cytoplasm. It catalyses the reaction 2 D-alanine + ATP = D-alanyl-D-alanine + ADP + phosphate + H(+). It functions in the pathway cell wall biogenesis; peptidoglycan biosynthesis. Cell wall formation. The protein is D-alanine--D-alanine ligase of Synechococcus sp. (strain CC9311).